Reading from the N-terminus, the 648-residue chain is MTPLLELKDIRRSYPAGDEQVEVLKGITLDIYAGEMVAIVGASGSGKSTLMNILGCLDKATSGTYRVAGQDVATLDADALAQLRREHFGFIFQRYHLLSHLTAEQNVEVPAVYAGLERKQRLLRAQELLQRLGLEDRTEYYPAQLSGGQQQRVSIARALMNGGQVILADEPTGALDSHSGEEVMAILHQLRDRGHMVIIVTHDPQVAAQAERVIEIRDGEIVRNPPAIEKVNVAGGTEPVVNTVSGWRQFVSGFNEALTMAWRALAANKMRTLLTMLGIIIGIASVVSIVVVGDAAKQMVLADIRSIGTNTIDVYPGKDFGDDDPQYQQALKYDDLIAIQKQPWVASATPAVSQNLRLRYNNVDVAASANGVSGDYFNVYGMTFSEGNTFNQEQLNGRAQVVVLDSNTRRQLFPHKADVVGEVILVGNMPARVIGVAEEKQSMFGSSKVLRVWLPYSTMSGRVMGQSWLNSITVRVKEGFDSAEAEQQLTRLLSLRHGKKDFFTWNMDGVLKTVEKTTRTLQLFLTLVAVISLVVGGIGVMNIMLVSVTERTREIGIRMAVGARASDVLQQFLIEAVLVCLVGGALGITLSLLIAFTLQLFLPGWEIGFSPLALLLAFLCSTATGILFGWLPARNAARLDPVDALVRE.

Residues 5-243 (LELKDIRRSY…AGGTEPVVNT (239 aa)) enclose the ABC transporter domain. 41–48 (GASGSGKS) contacts ATP. Helical transmembrane passes span 273–293 (LLTM…VVVG), 523–543 (LFLT…VMNI), 576–596 (AVLV…LIAF), and 600–620 (LFLP…AFLC).

It belongs to the ABC transporter superfamily. Macrolide exporter (TC 3.A.1.122) family. Homodimer. Part of the tripartite efflux system MacAB-TolC, which is composed of an inner membrane transporter, MacB, a periplasmic membrane fusion protein, MacA, and an outer membrane component, TolC. The complex forms a large protein conduit and can translocate molecules across both the inner and outer membranes. Interacts with MacA.

It localises to the cell inner membrane. Part of the tripartite efflux system MacAB-TolC. MacB is a non-canonical ABC transporter that contains transmembrane domains (TMD), which form a pore in the inner membrane, and an ATP-binding domain (NBD), which is responsible for energy generation. Confers resistance against macrolides. In Shigella boydii serotype 4 (strain Sb227), this protein is Macrolide export ATP-binding/permease protein MacB.